The primary structure comprises 207 residues: Uridine kinase (207 aa).

ATP is bound at residue 13 to 20 (GASGSGKT).

This sequence belongs to the uridine kinase family.

It is found in the cytoplasm. It catalyses the reaction uridine + ATP = UMP + ADP + H(+). The enzyme catalyses cytidine + ATP = CMP + ADP + H(+). It functions in the pathway pyrimidine metabolism; CTP biosynthesis via salvage pathway; CTP from cytidine: step 1/3. It participates in pyrimidine metabolism; UMP biosynthesis via salvage pathway; UMP from uridine: step 1/1. The sequence is that of Uridine kinase from Ureaplasma urealyticum serovar 10 (strain ATCC 33699 / Western).